The sequence spans 113 residues: Large ribosomal subunit protein P1z (113 aa).

Positions 87–113 (AAAPAKEEKKDEPAEESDGDLGFGLFD) are disordered. Ser-103 bears the Phosphoserine mark.

This sequence belongs to the eukaryotic ribosomal protein P1/P2 family. In terms of assembly, P1 and P2 exist as dimers at the large ribosomal subunit.

Its function is as follows. Plays an important role in the elongation step of protein synthesis. The polypeptide is Large ribosomal subunit protein P1z (RPP1B) (Arabidopsis thaliana (Mouse-ear cress)).